Here is a 254-residue protein sequence, read N- to C-terminus: tRNA (guanine-N(1)-)-methyltransferase (254 aa).

Residues Gly-113 and 133–138 (LGDFVL) each bind S-adenosyl-L-methionine.

This sequence belongs to the RNA methyltransferase TrmD family. Homodimer.

It is found in the cytoplasm. The enzyme catalyses guanosine(37) in tRNA + S-adenosyl-L-methionine = N(1)-methylguanosine(37) in tRNA + S-adenosyl-L-homocysteine + H(+). Specifically methylates guanosine-37 in various tRNAs. In Herpetosiphon aurantiacus (strain ATCC 23779 / DSM 785 / 114-95), this protein is tRNA (guanine-N(1)-)-methyltransferase.